A 316-amino-acid polypeptide reads, in one-letter code: Ornithine carbamoyltransferase (316 aa).

Carbamoyl phosphate contacts are provided by residues 57 to 60 (STRT), Gln84, Arg108, and 135 to 138 (HPCQ). L-ornithine contacts are provided by residues Asn166, Asp230, and 234 to 235 (SM). Carbamoyl phosphate contacts are provided by residues 269 to 270 (CL) and Arg297.

This sequence belongs to the aspartate/ornithine carbamoyltransferase superfamily. OTCase family.

The protein resides in the cytoplasm. It catalyses the reaction carbamoyl phosphate + L-ornithine = L-citrulline + phosphate + H(+). It functions in the pathway amino-acid biosynthesis; L-arginine biosynthesis; L-arginine from L-ornithine and carbamoyl phosphate: step 1/3. Its function is as follows. Reversibly catalyzes the transfer of the carbamoyl group from carbamoyl phosphate (CP) to the N(epsilon) atom of ornithine (ORN) to produce L-citrulline. The chain is Ornithine carbamoyltransferase from Bacillus thuringiensis subsp. konkukian (strain 97-27).